Consider the following 376-residue polypeptide: 1-acyl-sn-glycerol-3-phosphate acyltransferase gamma (376 aa).

Residues 1-124 are Cytoplasmic-facing; that stretch reads MGLLAFLKTQ…LGSSKVLAKK (124 aa). An HXXXXD motif motif is present at residues 96–101; that stretch reads HNFEID. The helical transmembrane segment at 125 to 145 threads the bilayer; the sequence is ELLYVPLIGWTWYFLEIVFCK. The Lumenal portion of the chain corresponds to 146–316; that stretch reads RKWEEDRDTV…TLLNFLSWAT (171 aa). A helical membrane pass occupies residues 317–339; that stretch reads ILLSPLFSFVLGVFASGSPLLIL. Topologically, residues 340 to 376 are cytoplasmic; sequence TFLGFVGAASFGVRRLIGVTEIEKGSSYGNQEFKKKE.

This sequence belongs to the 1-acyl-sn-glycerol-3-phosphate acyltransferase family. Widely expressed with highest levels in testis, pancreas and kidney, followed by spleen, lung, adipose tissue and liver.

The protein localises to the endoplasmic reticulum membrane. It is found in the nucleus envelope. It catalyses the reaction a 1-acyl-sn-glycero-3-phosphate + an acyl-CoA = a 1,2-diacyl-sn-glycero-3-phosphate + CoA. The enzyme catalyses pentadecanoyl-CoA + 1-(9Z-octadecenoyl)-sn-glycero-3-phosphate = 1-(9Z)-octadecenoyl-2-pentadecanoyl-sn-glycero-3-phosphate + CoA. The catalysed reaction is heptadecanoyl-CoA + 1-(9Z-octadecenoyl)-sn-glycero-3-phosphate = 1-(9Z)-octadecenoyl-2-heptadecanoyl-sn-glycero-3-phosphate + CoA. It carries out the reaction 1-(9Z-octadecenoyl)-sn-glycero-3-phosphate + octadecanoyl-CoA = 1-(9Z-octadecenoyl)-2-octadecanoyl-sn-glycero-3-phosphate + CoA. It catalyses the reaction nonadecanoyl-CoA + 1-(9Z-octadecenoyl)-sn-glycero-3-phosphate = 1-(9Z)-octadecenoyl-2-nonadecanoyl-sn-glycero-3-phosphate + CoA. The enzyme catalyses 1-(9Z-octadecenoyl)-sn-glycero-3-phosphate + (5Z,8Z,11Z,14Z)-eicosatetraenoyl-CoA = 1-(9Z)-octadecenoyl-2-(5Z,8Z,11Z,14Z)-eicosatetraenoyl-sn-glycero-3-phosphate + CoA. The catalysed reaction is 1-(9Z-octadecenoyl)-sn-glycero-3-phosphate + (9Z)-octadecenoyl-CoA = 1,2-di-(9Z-octadecenoyl)-sn-glycero-3-phosphate + CoA. It carries out the reaction 1-(9Z-octadecenoyl)-sn-glycero-3-phosphate + (9Z,12Z)-octadecadienoyl-CoA = 1-(9Z)-octadecenoyl-2-(9Z,12Z)-octadecadienoyl-sn-glycero-3-phosphate + CoA. It catalyses the reaction 1-(9Z-octadecenoyl)-sn-glycero-3-phosphocholine + (5Z,8Z,11Z,14Z)-eicosatetraenoyl-CoA = 1-(9Z)-octadecenoyl-2-(5Z,8Z,11Z,14Z)-icosatetraenoyl-sn-glycero-3-phosphocholine + CoA. The enzyme catalyses 1-(9Z-octadecenoyl)-sn-glycero-3-phospho-(1D-myo-inositol) + (5Z,8Z,11Z,14Z)-eicosatetraenoyl-CoA = 1-(9Z-octadecenoyl)-2-(5Z,8Z,11Z,14Z-eicosatetraenoyl)-sn-glycero-3-phospho-1D-myo-inositol + CoA. The catalysed reaction is 1-(9Z-octadecenoyl)-sn-glycero-3-phospho-L-serine + (5Z,8Z,11Z,14Z)-eicosatetraenoyl-CoA = 1-(9Z-octadecenoyl)-2-(5Z,8Z,11Z,14Z-eicosatetraenoyl)-sn-glycero-3-phospho-L-serine + CoA. It carries out the reaction 1-hexadecanoyl-sn-glycero-3-phosphate + (9Z)-octadecenoyl-CoA = 1-hexadecanoyl-2-(9Z-octadecenoyl)-sn-glycero-3-phosphate + CoA. It catalyses the reaction 1-hexadecanoyl-sn-glycero-3-phosphate + (5Z,8Z,11Z,14Z)-eicosatetraenoyl-CoA = 1-hexadecanoyl-2-(5Z,8Z,11Z,14Z-eicosatetraenoyl)-sn-glycero-3-phosphate + CoA. The enzyme catalyses 1-heptadecanoyl-sn-glycero-3-phosphate + (5Z,8Z,11Z,14Z)-eicosatetraenoyl-CoA = 1-heptadecanoyl-2-(5Z,8Z,11Z,14Z)-eicosatetraenoyl-sn-glycero-3-phosphate + CoA. The catalysed reaction is 1-octadecanoyl-sn-glycero-3-phosphate + (9Z)-octadecenoyl-CoA = 1-octadecanoyl-2-(9Z-octadecenoyl)-sn-glycero-3-phosphate + CoA. It carries out the reaction 1-octadecanoyl-sn-glycero-3-phosphate + (5Z,8Z,11Z,14Z)-eicosatetraenoyl-CoA = 1-octadecanoyl-2-(5Z,8Z,11Z,14Z-eicosatetraenoyl)-sn-glycero-3-phosphate + CoA. It catalyses the reaction 1-(9Z-octadecenoyl)-sn-glycero-3-phosphate + hexadecanoyl-CoA = 1-hexadecanoyl-2-(9Z-octadecenoyl)-sn-glycero-3-phosphate + CoA. The enzyme catalyses 1-O-(9Z-octadecenyl)-sn-glycero-3-phosphate + (5Z,8Z,11Z,14Z)-eicosatetraenoyl-CoA = 1-O-(9Z-octadecenyl)-2-(5Z,8Z,11Z,14Z-eicosatetraenoyl)-sn-glycero-3-phosphate + CoA. The catalysed reaction is a 1-acyl-sn-glycero-3-phospho-(1D-myo-inositol) + (5Z,8Z,11Z,14Z)-eicosatetraenoyl-CoA = a 1-acyl-2-(5Z,8Z,11Z,14Z-eicosatetraenoyl)-sn-glycero-3-phospho-(1D-myo-inositol) + CoA. The protein operates within phospholipid metabolism; CDP-diacylglycerol biosynthesis; CDP-diacylglycerol from sn-glycerol 3-phosphate: step 2/3. In terms of biological role, converts 1-acyl-sn-glycerol-3-phosphate (lysophosphatidic acid or LPA) into 1,2-diacyl-sn-glycerol-3-phosphate (phosphatidic acid or PA) by incorporating an acyl moiety at the sn-2 position of the glycerol backbone. Acts on LPA containing saturated or unsaturated fatty acids C16:0-C20:4 at the sn-1 position using C18:1, C20:4 or C18:2-CoA as the acyl donor. Also acts on lysophosphatidylcholine, lysophosphatidylinositol and lysophosphatidylserine using C18:1 or C20:4-CoA. Has a preference for arachidonoyl-CoA as a donor. Also has a modest lysophosphatidylinositol acyltransferase (LPIAT) activity, converts lysophosphatidylinositol (LPI) into phosphatidylinositol. This Homo sapiens (Human) protein is 1-acyl-sn-glycerol-3-phosphate acyltransferase gamma (AGPAT3).